The primary structure comprises 51 residues: Large ribosomal subunit protein bL33 (51 aa).

This sequence belongs to the bacterial ribosomal protein bL33 family.

The polypeptide is Large ribosomal subunit protein bL33 (Acidithiobacillus ferrooxidans (strain ATCC 53993 / BNL-5-31) (Leptospirillum ferrooxidans (ATCC 53993))).